The chain runs to 1418 residues: Protein ced-11 (1418 aa).

Helical transmembrane passes span 617–637, 755–775, 782–802, 818–838, 856–876, 898–918, and 986–1006; these read FPIF…IIPV, YWLS…SVVL, LWDT…CFVL, VFDV…KVFP, VVSA…YIPL, FLFM…AVVF, and IVIE…FAFF.

It localises to the membrane. Functionally, plays a major role in programmed cell death. This is Protein ced-11 (ced-11) from Caenorhabditis elegans.